Here is a 189-residue protein sequence, read N- to C-terminus: GTP cyclohydrolase 1 (189 aa).

Residues Cys-79, His-82, and Cys-150 each coordinate Zn(2+).

This sequence belongs to the GTP cyclohydrolase I family. Homomer.

The enzyme catalyses GTP + H2O = 7,8-dihydroneopterin 3'-triphosphate + formate + H(+). It participates in cofactor biosynthesis; 7,8-dihydroneopterin triphosphate biosynthesis; 7,8-dihydroneopterin triphosphate from GTP: step 1/1. The chain is GTP cyclohydrolase 1 from Rickettsia africae (strain ESF-5).